The primary structure comprises 533 residues: Flavin-containing monooxygenase 5 (533 aa).

Arginine 5 carries the dimethylated arginine modification. Residues 10 to 14, glutamate 33, and 41 to 42 each bind FAD; these read GSGAS and LW. Serine 54 is subject to Phosphoserine. Tyrosine 56 carries the post-translational modification Phosphotyrosine. Residue serine 58 is modified to Phosphoserine. An FAD-binding site is contributed by 62 to 63; it reads NT. 196–199 provides a ligand contact to NADP(+); that stretch reads SGGD. Threonine 284 is modified (phosphothreonine). Serine 401 carries the phosphoserine modification. Residues 513-533 traverse the membrane as a helical segment; that stretch reads LVTVRVLMLAVTFLAVILAYF.

It belongs to the FMO family. FAD serves as cofactor.

Its subcellular location is the microsome membrane. The protein localises to the endoplasmic reticulum membrane. The catalysed reaction is N,N-dimethylaniline + NADPH + O2 + H(+) = N,N-dimethylaniline N-oxide + NADP(+) + H2O. The enzyme catalyses NADPH + O2 + H(+) = H2O2 + NADP(+). It carries out the reaction heptan-2-one + NADPH + O2 + H(+) = pentyl acetate + NADP(+) + H2O. It catalyses the reaction octan-3-one + NADPH + O2 + H(+) = pentyl propanoate + NADP(+) + H2O. The catalysed reaction is octan-3-one + NADPH + O2 + H(+) = ethyl hexanoate + NADP(+) + H2O. The enzyme catalyses hexan-3-one + NADPH + O2 + H(+) = ethyl butanoate + NADP(+) + H2O. It carries out the reaction hexan-3-one + NADPH + O2 + H(+) = propyl propanoate + NADP(+) + H2O. It catalyses the reaction heptan-4-one + NADPH + O2 + H(+) = propyl butanoate + NADP(+) + H2O. The catalysed reaction is (2E)-geranial + NADPH + O2 + H(+) = (1E)-2,6-dimethylhepta-1,5-dien-1-yl formate + NADP(+) + H2O. The enzyme catalyses sulcatone + NADPH + O2 + H(+) = 4-methylpent-3-en-1-yl acetate + NADP(+) + H2O. Functionally, acts as a Baeyer-Villiger monooxygenase on a broad range of substrates. Catalyzes the insertion of an oxygen atom into a carbon-carbon bond adjacent to a carbonyl, which converts ketones to esters. Active on diverse carbonyl compounds, whereas soft nucleophiles are mostly non- or poorly reactive. In contrast with other forms of FMO it is non- or poorly active on 'classical' substrates such as drugs, pesticides, and dietary components containing soft nucleophilic heteroatoms. Able to oxidize drug molecules bearing a carbonyl group on an aliphatic chain, such as nabumetone and pentoxifylline. Also, in the absence of substrates, shows slow but yet significant NADPH oxidase activity. Acts as a positive modulator of cholesterol biosynthesis as well as glucose homeostasis, promoting metabolic aging via pleiotropic effects. In Rattus norvegicus (Rat), this protein is Flavin-containing monooxygenase 5.